The chain runs to 413 residues: Intracellular hyaluronan-binding protein 4 (413 aa).

Residues Ser7 and Ser36 each carry the phosphoserine modification. The stretch at Asp40–Ala64 forms a coiled coil. Residues Leu42 to Asp206 form a disordered region. The segment covering Ala62–Arg82 has biased composition (low complexity). At Arg70 the chain carries Omega-N-methylarginine. Residue Ser74 is modified to Phosphoserine. Positions Gly87–Ser97 are enriched in basic and acidic residues. Ser108 carries the post-translational modification Phosphoserine. Residues Met139–Leu182 show a composition bias toward basic and acidic residues. Positions Gly184–Gly201 are enriched in gly residues. Glycyl lysine isopeptide (Lys-Gly) (interchain with G-Cter in SUMO1); alternate cross-links involve residues Lys213 and Lys276. Residues Lys213 and Lys276 each participate in a glycyl lysine isopeptide (Lys-Gly) (interchain with G-Cter in SUMO2); alternate cross-link. The segment at Val227–Ser320 is disordered. Residues Asp294–Glu315 show a composition bias toward basic and acidic residues. Lys336 is covalently cross-linked (Glycyl lysine isopeptide (Lys-Gly) (interchain with G-Cter in SUMO1); alternate). Residue Lys336 forms a Glycyl lysine isopeptide (Lys-Gly) (interchain with G-Cter in SUMO2); alternate linkage. Thr354 and Thr375 each carry phosphothreonine; by PKC. The disordered stretch occupies residues Asn360 to Ser413. Residues Asp404–Ser413 show a composition bias toward acidic residues.

Belongs to the SERBP1-HABP4 family. In terms of assembly, associates with ribosomes; promoting ribosome stabilization. Interacts with EEF2/eEF2; promoting ribosome stabilization. Interacts with FMR1. Interacts with FXR1 and FXR2. Interacts with CHD3 (via C-terminus). Interacts (via C-terminus) with RACK1. Interacts with p53/TP53. Interacts (via N-terminus) with SRSF9; this interaction is direct. Interacts with SYNCRIP; this interaction is direct. Interacts with MEF2C (via N-terminus); this interaction decreases DNA-binding activity of MEF2C in myocardial cells in response to mechanical stress. Interacts with PRMT1 (via N-terminus). Interacts with SPIN1. Post-translationally, methylated. Methylation is decreased by phorbol 12-myristate 13-acetate (PMA)-activated PKC, in vitro. Phosphorylated by phorbol 12-myristate 13-acetate (PMA)-activated PKC isoforms at Thr-354 and Thr-375. As to expression, highly expressed in brain, heart, and kidney, and moderately expressed in skeletal muscle. Also expressed in a variety of tumor cell lines and in activated but not resting leukocytes.

It localises to the nucleus. The protein resides in the cytoplasm. The protein localises to the stress granule. It is found in the sarcoplasm. Its subcellular location is the nuclear body. It localises to the nucleolus. The protein resides in the nucleus speckle. The protein localises to the cajal body. It is found in the gem. In terms of biological role, ribosome-binding protein that promotes ribosome hibernation, a process during which ribosomes are stabilized in an inactive state and preserved from proteasomal degradation. Acts via its association with EEF2/eEF2 factor at the A-site of the ribosome, promoting ribosome stabilization in an inactive state compatible with storage. Plays a key role in ribosome hibernation in the mature oocyte by promoting ribosome stabilization. Ribosomes, which are produced in large quantities during oogenesis, are stored and translationally repressed in the oocyte and early embryo. Also binds RNA, regulating transcription and pre-mRNA splicing. Binds (via C-terminus) to poly(U) RNA. Seems to play a role in PML-nuclear bodies formation. Negatively regulates DNA-binding activity of the transcription factor MEF2C in myocardial cells in response to mechanical stress. The protein is Intracellular hyaluronan-binding protein 4 of Homo sapiens (Human).